The sequence spans 492 residues: Catalase (492 aa).

Active-site residues include His-65 and Asn-138. A heme-binding site is contributed by Tyr-348.

It belongs to the catalase family. As to quaternary structure, homotetramer. The cofactor is heme.

The protein resides in the cytoplasm. It is found in the cytosol. It localises to the peroxisome matrix. The catalysed reaction is 2 H2O2 = O2 + 2 H2O. Functionally, catalyzes the degradation of hydrogen peroxide (H(2)O(2)) generated by peroxisomal oxidases to water and oxygen, thereby protecting cells from the toxic effects of hydrogen peroxide. This Ipomoea batatas (Sweet potato) protein is Catalase.